The sequence spans 226 residues: Ribosomal RNA large subunit methyltransferase E (226 aa).

Positions 1 to 25 are disordered; it reads MVKPPAGGNEGGRGKPARLKTAYGR. The S-adenosyl-L-methionine site is built by G82, W84, D100, D116, and D140. K180 functions as the Proton acceptor in the catalytic mechanism.

The protein belongs to the class I-like SAM-binding methyltransferase superfamily. RNA methyltransferase RlmE family.

Its subcellular location is the cytoplasm. It catalyses the reaction uridine(2552) in 23S rRNA + S-adenosyl-L-methionine = 2'-O-methyluridine(2552) in 23S rRNA + S-adenosyl-L-homocysteine + H(+). Specifically methylates the uridine in position 2552 of 23S rRNA at the 2'-O position of the ribose in the fully assembled 50S ribosomal subunit. This Caulobacter vibrioides (strain ATCC 19089 / CIP 103742 / CB 15) (Caulobacter crescentus) protein is Ribosomal RNA large subunit methyltransferase E.